The following is a 133-amino-acid chain: Small ribosomal subunit protein uS8 (133 aa).

It belongs to the universal ribosomal protein uS8 family. Part of the 30S ribosomal subunit. Contacts proteins S5 and S12.

Functionally, one of the primary rRNA binding proteins, it binds directly to 16S rRNA central domain where it helps coordinate assembly of the platform of the 30S subunit. This is Small ribosomal subunit protein uS8 from Koribacter versatilis (strain Ellin345).